The primary structure comprises 325 residues: Tagatose 1,6-diphosphate aldolase (325 aa).

The protein belongs to the aldolase LacD family.

The enzyme catalyses D-tagatofuranose 1,6-bisphosphate = D-glyceraldehyde 3-phosphate + dihydroxyacetone phosphate. It functions in the pathway carbohydrate metabolism; D-tagatose 6-phosphate degradation; D-glyceraldehyde 3-phosphate and glycerone phosphate from D-tagatose 6-phosphate: step 2/2. This is Tagatose 1,6-diphosphate aldolase from Staphylococcus haemolyticus (strain JCSC1435).